The sequence spans 138 residues: Putative membrane protein ORF6 (138 aa).

The next 2 helical transmembrane spans lie at Leu-4–Leu-20 and Val-37–Ile-53.

The protein resides in the membrane. The chain is Putative membrane protein ORF6 (ORF6) from Ictalurid herpesvirus 1 (strain Auburn) (IcHV-1).